The chain runs to 181 residues: MPLPQVRATTILAVRRNGQVAIGGDGQVSVGDTVAKQRAVKVRTLKGGRVLAGFAGSVADALTLFEKFEEKLERYPGNLPRASVELAKEWRSDRVLRRLEAMLIVADVEHGFMLSGNGELIEPDDGILAIGSGGAYAQAAARALMRETQLPPRDIVEKALTIAGEICIYTNTNITVLEPTR.

The active site involves Thr9. Na(+) contacts are provided by Gly164, Cys167, and Thr170.

The protein belongs to the peptidase T1B family. HslV subfamily. In terms of assembly, a double ring-shaped homohexamer of HslV is capped on each side by a ring-shaped HslU homohexamer. The assembly of the HslU/HslV complex is dependent on binding of ATP.

It is found in the cytoplasm. The enzyme catalyses ATP-dependent cleavage of peptide bonds with broad specificity.. Its activity is regulated as follows. Allosterically activated by HslU binding. Its function is as follows. Protease subunit of a proteasome-like degradation complex believed to be a general protein degrading machinery. This is ATP-dependent protease subunit HslV from Gemmatimonas aurantiaca (strain DSM 14586 / JCM 11422 / NBRC 100505 / T-27).